The primary structure comprises 429 residues: MASIQRVTARQILDSRGTPTVEVDVTTGEGVLGRAAVPSGASTGAYEAVELRDGDADRYHGQGVLRAVGHVNDAVADALHGMSVLEQVAIDDTLRALDGTEDKSNLGANAILGASLAAAKAGAATLGVPLYRHLGRATARTLPVPLMNILNGGEHADNNVDMQEFMIAPAGADSFSEALRTGAEVFHTLASVLQDRDYSTAVGDEGGFAPDLGSNEEAVELILDAIEKAGYTAGSDVFVALDPAAAEMVEDEAYVFWKSDPDTERSSEDMVEYWAEWVDRYPILSIEDAMDEDDWDGWAMLTDAIGDEVQLVGDDLFVTNTKRLTRGVEEGCGNSILIKPNQIGTLTETLNAIETAHTHGFTAIISHRSGETEDTTIADLAVATGTGQIKTGSASRSDRVAKYNQLLRIEEQLGATAHYPRLDAFPLTN.

Glutamine 163 contributes to the (2R)-2-phosphoglycerate binding site. Catalysis depends on glutamate 205, which acts as the Proton donor. Residues aspartate 242, glutamate 287, and aspartate 314 each coordinate Mg(2+). The (2R)-2-phosphoglycerate site is built by lysine 339, arginine 368, serine 369, and lysine 390. Lysine 339 acts as the Proton acceptor in catalysis.

This sequence belongs to the enolase family. The cofactor is Mg(2+).

Its subcellular location is the cytoplasm. The protein localises to the secreted. The protein resides in the cell surface. It carries out the reaction (2R)-2-phosphoglycerate = phosphoenolpyruvate + H2O. Its pathway is carbohydrate degradation; glycolysis; pyruvate from D-glyceraldehyde 3-phosphate: step 4/5. Functionally, catalyzes the reversible conversion of 2-phosphoglycerate (2-PG) into phosphoenolpyruvate (PEP). It is essential for the degradation of carbohydrates via glycolysis. The protein is Enolase of Salinibacter ruber (strain DSM 13855 / M31).